Here is a 321-residue protein sequence, read N- to C-terminus: Citrate synthase (321 aa).

Active-site residues include His-248 and Asp-306.

This sequence belongs to the citrate synthase family.

The catalysed reaction is oxaloacetate + acetyl-CoA + H2O = citrate + CoA + H(+). It functions in the pathway carbohydrate metabolism; tricarboxylic acid cycle; isocitrate from oxaloacetate: step 1/2. In Bartonella elizabethae (Rochalimaea elizabethae), this protein is Citrate synthase (gltA).